The sequence spans 675 residues: 1,4-alpha-glucan branching enzyme TK1436 (675 aa).

The active-site Nucleophile is Glu183. Substrate is bound by residues Arg261 and Gly278. The Proton donor role is filled by Asp354. Substrate-binding residues include Trp407, Asp467, and Gln476. Disordered stretches follow at residues 537-563 and 581-627; these read PELEEYVEPPEVPPEKEETEEKPKVLT and EETR…LSIK. Composition is skewed to basic and acidic residues over residues 549–563 and 581–595; these read PPEKEETEEKPKVLT and EETREVKKKAVEASK. Residues 596–616 show a composition bias toward basic residues; it reads RGKRKSSKSKRLPRKVSKKAP.

Belongs to the glycosyl hydrolase 57 family. As to quaternary structure, monomer.

The catalysed reaction is Transfers a segment of a (1-&gt;4)-alpha-D-glucan chain to a primary hydroxy group in a similar glucan chain.. In terms of biological role, catalyzes the formation of branch points in alpha-glucans by cleavage of an alpha-1,4 glycosidic bond and subsequent transfer of the cleaved-off oligosaccharide to a new alpha-1,6 position. The branch chain-length distribution of the reaction products shows degree of polymerization (DP) of 5 to 30, with two local maxima at DP 6 and DP 11. Exhibits an alpha-retaining catalytic mechanism. Does not display alpha-galactosidase or pullulanase activity, since melibiose and pullulan are not substrates. Is not able to catalyze the hydrolysis or transglycosylation of maltoheptaose, suggesting that the TK1436 protein contains neither alpha-amylase nor 4-alpha-glucanotransferase activity. The chain is 1,4-alpha-glucan branching enzyme TK1436 from Thermococcus kodakarensis (strain ATCC BAA-918 / JCM 12380 / KOD1) (Pyrococcus kodakaraensis (strain KOD1)).